Consider the following 174-residue polypeptide: uncharacterized protein (174 aa).

The tract at residues 138–174 is disordered; that stretch reads VNLTSKSSGRSDEEGTTRRAPVLKTRADFVSRKDKHR. Residues 162-174 are compositionally biased toward basic and acidic residues; that stretch reads TRADFVSRKDKHR.

This is an uncharacterized protein from Bos taurus (Bovine).